Here is a 100-residue protein sequence, read N- to C-terminus: Large ribosomal subunit protein bL28 (100 aa).

Belongs to the bacterial ribosomal protein bL28 family.

This Ehrlichia ruminantium (strain Welgevonden) protein is Large ribosomal subunit protein bL28.